The primary structure comprises 329 residues: Sex comb on midleg-like protein 1 (329 aa).

Residues Ser-138 and Ser-238 each carry the phosphoserine modification. The interval 138-157 is disordered; the sequence is SPTLPVSRRENNSPSNLPRP. Residues 258–325 form the SAM domain; sequence WSVEAVVLFL…YYIDRLKQGK (68 aa).

The protein belongs to the SCM family. In terms of tissue distribution, ubiquitous. Expressed in fetal and adult tissues.

The protein localises to the nucleus. Functionally, putative Polycomb group (PcG) protein. PcG proteins act by forming multiprotein complexes, which are required to maintain the transcriptionally repressive state of homeotic genes throughout development. May be involved in spermatogenesis during sexual maturation. This Homo sapiens (Human) protein is Sex comb on midleg-like protein 1 (SCML1).